The chain runs to 172 residues: MEHQGQHGHVTSRVDEYGNPVGTGAGHGQMGTAGMGTHGTTGGMGTHGTTGGMGTHGTTGTGGGQFQPMREEHKTGGVLQRSGSSSSSSSEDDGMGGRRKKGIKEKIKEKLPGGNKGEQQHAMGGTGGAYGQQGHGTGMTTGTTGAHGTTTTDTGEKKGIMDKIKEKLPGQH.

Positions Met1 to His172 are disordered. The Type A repeat unit spans residues His3–Gly28. Gly residues predominate over residues Val21–Gln65. The Type B repeat unit spans residues Arg98–Asn115. Over residues Gly124–Met139 the composition is skewed to gly residues. One copy of the Type A repeat lies at Gly125–Thr149. A compositionally biased stretch (low complexity) spans Thr140 to Asp153. Over residues Thr154–His172 the composition is skewed to basic and acidic residues. A Type B repeat occupies Glu156–His172.

This sequence belongs to the plant dehydrin family.

The protein resides in the cytoplasm. The polypeptide is Water stress-inducible protein Rab21 (RAB21) (Oryza sativa subsp. indica (Rice)).